Reading from the N-terminus, the 312-residue chain is Short-chain dehydrogenase/reductase pkfC (312 aa).

NADP(+)-binding residues include Lys56, Asn108, and Lys140. The active-site Proton donor is Ser164. NADP(+) contacts are provided by Tyr193 and Lys197. Tyr193 (proton acceptor) is an active-site residue. Lys197 acts as the Lowers pKa of active site Tyr in catalysis.

Belongs to the short-chain dehydrogenases/reductases (SDR) family.

It functions in the pathway secondary metabolite biosynthesis. Its function is as follows. Short-chain dehydrogenase/reductase; part of the gene cluster that mediates the biosynthesis of aspernidine A, a prenylated isoindolinone. The starting point of the biosynthesis of aspernidin A is the production of orsellinaldehyde by the non-reducing polyketide synthase pkfA. Hydroxylation, methylation of one of the phenol groups, and prenylation, presumably catalyzed by the prenyltransferase pkfE, would be needed to yield aspernidine D. Subsequently, the cytochrome P450 monooxygenase pkfB is responsible for hydroxylation of aspernidine D to yield aspernidine E. The dehydrogenase pkfF may be responsible for further oxidation of aspernidine E to form a dialdehyde intermediate which is further transformed in a series of steps, some of which are enzyme-mediated, to generate aspernidine A. The possibility that additional enzymes outside of the cluster are involved in aspernidine A biosynthesis cannot be excluded. The sequence is that of Short-chain dehydrogenase/reductase pkfC from Emericella nidulans (strain FGSC A4 / ATCC 38163 / CBS 112.46 / NRRL 194 / M139) (Aspergillus nidulans).